Consider the following 413-residue polypeptide: Cardiolipin synthase B (413 aa).

PLD phosphodiesterase domains lie at 108–135 and 285–312; these read VFRR…SSEH and RRRP…DPLS. Residues histidine 113, lysine 115, aspartate 120, histidine 290, lysine 292, and aspartate 297 contribute to the active site. The disordered stretch occupies residues 388–413; the sequence is TQVDPPAQPTMETQDRVETENTGVNP.

The protein belongs to the phospholipase D family. Cardiolipin synthase subfamily. ClsB sub-subfamily.

The protein resides in the cell membrane. The enzyme catalyses 2 a 1,2-diacyl-sn-glycero-3-phospho-(1'-sn-glycerol) = a cardiolipin + glycerol. Functionally, catalyzes the phosphatidyl group transfer from one phosphatidylglycerol molecule to another to form cardiolipin (CL) (diphosphatidylglycerol) and glycerol. This chain is Cardiolipin synthase B, found in Shigella flexneri.